Here is a 584-residue protein sequence, read N- to C-terminus: POTE ankyrin domain family member D (584 aa).

6 ANK repeats span residues 172-201, 205-234, 238-267, 271-300, 304-333, and 337-366; these read EKRT…QLNV, KKRT…DRNI, YGNT…DIES, CGLT…NLNV, YGRT…DVSS, and SGQT…KQML. The interval 369 to 502 is disordered; it reads SSENSNPEQD…ILTNKQKQIE (134 aa). Composition is skewed to basic and acidic residues over residues 377–392, 401–412, and 466–481; these read QDLK…RLKV, MSQEPEINKDCD, and EEYH…KQLS. The segment covering 482–498 has biased composition (polar residues); it reads EEQNTGISQDEILTNKQ. Residues 494-583 adopt a coiled-coil conformation; that stretch reads LTNKQKQIEV…LNEEALTKTN (90 aa).

The protein belongs to the POTE family. Expressed in prostate, ovary, testis, placenta and prostate cancer cell lines. Localizes to basal and terminal prostate epithelial cells.

It is found in the cell membrane. This is POTE ankyrin domain family member D (POTED) from Homo sapiens (Human).